A 138-amino-acid polypeptide reads, in one-letter code: NADH-quinone oxidoreductase subunit A (138 aa).

The next 3 membrane-spanning stretches (helical) occupy residues 8–28 (FGAV…GYLT), 63–83 (FYVV…LFPW), and 93–113 (FALI…AYAW).

Belongs to the complex I subunit 3 family. NDH-1 is composed of 14 different subunits. Subunits NuoA, H, J, K, L, M, N constitute the membrane sector of the complex.

Its subcellular location is the cell inner membrane. The enzyme catalyses a quinone + NADH + 5 H(+)(in) = a quinol + NAD(+) + 4 H(+)(out). Functionally, NDH-1 shuttles electrons from NADH, via FMN and iron-sulfur (Fe-S) centers, to quinones in the respiratory chain. The immediate electron acceptor for the enzyme in this species is believed to be a menaquinone. Couples the redox reaction to proton translocation (for every two electrons transferred, four hydrogen ions are translocated across the cytoplasmic membrane), and thus conserves the redox energy in a proton gradient. The sequence is that of NADH-quinone oxidoreductase subunit A from Prosthecochloris aestuarii (strain DSM 271 / SK 413).